A 158-amino-acid polypeptide reads, in one-letter code: Glutathione peroxidase-like peroxiredoxin gpx1 (158 aa).

Cys36 (cysteine sulfenic acid (-SOH) intermediate) is an active-site residue. A disulfide bond links Cys36 and Cys82.

Belongs to the glutathione peroxidase family. As to quaternary structure, monomer.

The protein resides in the cytoplasm. It localises to the mitochondrion. It catalyses the reaction a hydroperoxide + [thioredoxin]-dithiol = an alcohol + [thioredoxin]-disulfide + H2O. In terms of biological role, glutathione peroxidase-like protein that protects cells during oxidative stress. Has peroxidase activity reducing hydrogen peroxide, alkyl and phospholipid hydroperoxides using preferentially thioredoxin as a reducing power. May act as a scavenger of H(2)O(2). The polypeptide is Glutathione peroxidase-like peroxiredoxin gpx1 (Schizosaccharomyces pombe (strain 972 / ATCC 24843) (Fission yeast)).